The sequence spans 576 residues: RNA-directed RNA polymerase subunit beta (576 aa).

The RdRp catalytic domain maps to 259–391; the sequence is RLARDGSLLN…PNRKKTFCDG (133 aa). 3 residues coordinate Mg(2+): Asp-274, Asp-359, and Asp-360.

Homodimer; the replicase complex can dimerize. Part of the viral RNA-dependent RNA polymerase complex, the other subunits are the host ribosomal protein S1, EF-Tu and EF-Ts. S1 is needed for the initiation of genomic RNA (+)-strand replication. Mg(2+) serves as cofactor.

The enzyme catalyses RNA(n) + a ribonucleoside 5'-triphosphate = RNA(n+1) + diphosphate. This is the catalytic subunit of the viral RNA-dependent RNA polymerase complex. This complex is involved in viral RNA replication that produces (+)-stranded genomes via a complementary, (-)-stranded intermediate. Binds RNA cooperatively with the host ribosomal protein S1. This is RNA-directed RNA polymerase subunit beta from Enterobacteria phage SP (Bacteriophage SP).